Reading from the N-terminus, the 162-residue chain is Ribonuclease (162 aa).

A signal peptide spans 1-29 (MKKISSVFTMFALIAAILFSGFIPQQAYA). Positions 30–53 (ETPLTQTATNETATIQLTSDVHTL) are excised as a propeptide. Glu125 serves as the catalytic Proton acceptor. His154 (proton donor) is an active-site residue.

Belongs to the ribonuclease N1/T1 family.

The protein localises to the secreted. This is a purine-specific ribonuclease. The polypeptide is Ribonuclease (Bacillus intermedius).